Consider the following 447-residue polypeptide: D-ribitol-5-phosphate cytidylyltransferase (447 aa).

It belongs to the IspD/TarI cytidylyltransferase family. IspD subfamily. As to quaternary structure, homodimer.

The protein resides in the cytoplasm. It localises to the cytosol. The catalysed reaction is D-ribitol 5-phosphate + CTP + H(+) = CDP-L-ribitol + diphosphate. It carries out the reaction D-ribose 5-phosphate + CTP + H(+) = CDP-D-ribose + diphosphate. It catalyses the reaction D-ribulose 5-phosphate + CTP + H(+) = CDP-D-ribulose + diphosphate. Its pathway is protein modification; protein glycosylation. In terms of biological role, cytidylyltransferase required for protein O-linked mannosylation. Catalyzes the formation of CDP-ribitol nucleotide sugar from D-ribitol 5-phosphate. CDP-ribitol is a substrate of FKTN during the biosynthesis of the phosphorylated O-mannosyl trisaccharide (N-acetylgalactosamine-beta-3-N-acetylglucosamine-beta-4-(phosphate-6-)mannose), a carbohydrate structure present in alpha-dystroglycan (DAG1), which is required for binding laminin G-like domain-containing extracellular proteins with high affinity. Shows activity toward other pentose phosphate sugars and mediates formation of CDP-ribulose or CDP-ribose using CTP and ribulose-5-phosphate or ribose-5-phosphate, respectively. Not involved in dolichol production. The protein is D-ribitol-5-phosphate cytidylyltransferase (Crppa) of Rattus norvegicus (Rat).